Consider the following 500-residue polypeptide: NAD(P)H-quinone oxidoreductase subunit 2 A, chloroplastic (500 aa).

Helical transmembrane passes span 14-34, 47-67, 89-109, 114-134, 139-159, 173-193, 217-237, 285-305, 313-333, 344-364, 385-405, 408-428, and 474-494; these read LLLFDGSLIFPECILIFGLIL, IPWFYFISSTSLVMSITALLF, IFQFLILLCSTLSIPLSVEYI, MAITEFLLFILTATLGGMFLC, FITIFVAPECFSLCSYLLSGY, YLLMGGASSSILVHAFSWLYG, PGISIALIFITVGIGFKLSPA, WHLLLEILAILSMILGNLIAI, MLAYSSIGQIGYVIIGIIVGD, YMLFYISMNLGTFACIVLFGL, ALSLALCLLSLGGLPPLAGFF, LHLFWCGWQAGLSFLVSIGLL, and MIVCVIASTIPGISMNPIIAI.

Belongs to the complex I subunit 2 family. As to quaternary structure, NDH is composed of at least 16 different subunits, 5 of which are encoded in the nucleus.

It is found in the plastid. The protein resides in the chloroplast thylakoid membrane. The catalysed reaction is a plastoquinone + NADH + (n+1) H(+)(in) = a plastoquinol + NAD(+) + n H(+)(out). It carries out the reaction a plastoquinone + NADPH + (n+1) H(+)(in) = a plastoquinol + NADP(+) + n H(+)(out). NDH shuttles electrons from NAD(P)H:plastoquinone, via FMN and iron-sulfur (Fe-S) centers, to quinones in the photosynthetic chain and possibly in a chloroplast respiratory chain. The immediate electron acceptor for the enzyme in this species is believed to be plastoquinone. Couples the redox reaction to proton translocation, and thus conserves the redox energy in a proton gradient. In Pelargonium hortorum (Common geranium), this protein is NAD(P)H-quinone oxidoreductase subunit 2 A, chloroplastic.